Here is a 163-residue protein sequence, read N- to C-terminus: Phosphopantetheine adenylyltransferase (163 aa).

Residue Ser9 coordinates substrate. Residues 9–10 and His17 contribute to the ATP site; that span reads SF. Residues Lys41, Ile75, and Arg89 each contribute to the substrate site. Residues 90–92, Glu100, and 125–131 each bind ATP; these read GIR and HLYVRSD.

Belongs to the bacterial CoaD family. Homohexamer. Mg(2+) is required as a cofactor.

Its subcellular location is the cytoplasm. It carries out the reaction (R)-4'-phosphopantetheine + ATP + H(+) = 3'-dephospho-CoA + diphosphate. Its pathway is cofactor biosynthesis; coenzyme A biosynthesis; CoA from (R)-pantothenate: step 4/5. Its function is as follows. Reversibly transfers an adenylyl group from ATP to 4'-phosphopantetheine, yielding dephospho-CoA (dPCoA) and pyrophosphate. The chain is Phosphopantetheine adenylyltransferase from Borrelia garinii subsp. bavariensis (strain ATCC BAA-2496 / DSM 23469 / PBi) (Borreliella bavariensis).